The primary structure comprises 415 residues: Multidrug resistance protein MdtA (415 aa).

An N-terminal signal peptide occupies residues 1–21; it reads MKSTVKKRGWVIAGIVVVALA. The segment at 387–415 is disordered; that stretch reads AQTAADAAKPERGERAPTDSARAAKGARS. Residues 394 to 403 show a composition bias toward basic and acidic residues; it reads AKPERGERAP.

Belongs to the membrane fusion protein (MFP) (TC 8.A.1) family. Part of a tripartite efflux system composed of MdtA, MdtB and MdtC.

Its subcellular location is the cell inner membrane. The polypeptide is Multidrug resistance protein MdtA (Cronobacter turicensis (strain DSM 18703 / CCUG 55852 / LMG 23827 / z3032)).